The chain runs to 179 residues: SCAN domain-containing protein 1 (179 aa).

Residues 1-108 are disordered; that stretch reads MAATEPILAA…GSRLGPETFR (108 aa). Low complexity predominate over residues 60–80; that stretch reads AIPTPQAAASAAPELPLGPAP. One can recognise an SCAN box domain in the interval 108 to 166; sequence RQRFRQFRYQDAAGPREAFRQLRELSRQWLRPDIRTKEQIVEMLVQEQLLAILPEAARA.

As to quaternary structure, interacts with ZNF202.

It localises to the nucleus. Its function is as follows. May regulate transcriptional activity. This chain is SCAN domain-containing protein 1 (SCAND1), found in Pongo pygmaeus (Bornean orangutan).